A 784-amino-acid polypeptide reads, in one-letter code: MKKRIPTLLATMIATALYSQQGLAADLASQCMLGVPSYDRPLVQGDTNDLPVTINADHAKGDYPDDAVFTGSVDIMQGNSRLQADEVQLHQKEAPGQPEPVRTVDALGNVHYDDNQVILKGPKGWANLNTKDTNVWEGDYQMVGRQGRGKADLMKQRGENRYTILDNGSFTSCLPGSDTWSVVGSEIIHDREEQVAEIWNARFKVGPVPIFYSPYLQLPVGDKRRSGFLIPNAKYTTTNYFEFYLPYYWNIAPNMDATITPHYMHRRGNIMWENEFRYLSQAGAGLMELDYLPSDKVYEDEHPNDDSSRRWLFYWQHSGVMDQVWRFNVDYTKVSDPSYFNDFDNKYGSSTDGYATQKFSVGYAVQNFNATVSTKQFQVFSEQNTSSYSAEPQLDVNYYQNDVGPFDTRIYGQAVHFVNTRDDMPEATRVHLEPTINLPLSNNWGSINTEAKLLATHYQQTNLDWYNSRNTTKLDESVNRVMPQFKVDGKMVFERDMEMLAPGYTQTLEPRAQYLYVPYRDQSDIYNYDSSLLQSDYSGLFRDRTYGGLDRIASANQVTTGVTSRIYDDAAVERFNISVGQIYYFTESRTGDDNITWENDDKTGSLVWAGDTYWRISERWGLRGGIQYDTRLDNVATSNSSIEYRRDEDRLVQLNYRYASPEYIQATLPKYYSTAEQYKNGISQVGAVASWPIADRWSIVGAYYYDTNANKQADSMLGVQYSSCCYAIRVGYERKLNGWDNDKQHAVYDNAIGFNIELRGLSSNYGLGTQEMLRSNILPYQNTL.

The signal sequence occupies residues 1-24; that stretch reads MKKRIPTLLATMIATALYSQQGLA. 2 cysteine pairs are disulfide-bonded: C31–C724 and C173–C725.

This sequence belongs to the LptD family. Component of the lipopolysaccharide transport and assembly complex. Interacts with LptE and LptA. In terms of processing, contains two intramolecular disulfide bonds.

It is found in the cell outer membrane. Functionally, together with LptE, is involved in the assembly of lipopolysaccharide (LPS) at the surface of the outer membrane. The protein is LPS-assembly protein LptD of Shigella sonnei (strain Ss046).